Here is a 435-residue protein sequence, read N- to C-terminus: Glutamyl-tRNA reductase (435 aa).

Substrate-binding positions include 50–53, Ser-110, 115–117, and Gln-121; these read TCNR and ETQ. Cys-51 functions as the Nucleophile in the catalytic mechanism. 189–194 serves as a coordination point for NADP(+); the sequence is GAGEMS.

This sequence belongs to the glutamyl-tRNA reductase family. As to quaternary structure, homodimer.

It catalyses the reaction (S)-4-amino-5-oxopentanoate + tRNA(Glu) + NADP(+) = L-glutamyl-tRNA(Glu) + NADPH + H(+). It participates in porphyrin-containing compound metabolism; protoporphyrin-IX biosynthesis; 5-aminolevulinate from L-glutamyl-tRNA(Glu): step 1/2. Its function is as follows. Catalyzes the NADPH-dependent reduction of glutamyl-tRNA(Glu) to glutamate 1-semialdehyde (GSA). The protein is Glutamyl-tRNA reductase of Campylobacter lari (strain RM2100 / D67 / ATCC BAA-1060).